The chain runs to 827 residues: Ribosome biogenesis protein ERB1 (827 aa).

The interval Met1–Pro129 is disordered. Positions Asp7–Lys18 are enriched in basic and acidic residues. Over residues Cys45 to Val60 the composition is skewed to acidic residues. Residues Leu61–Ser77 are compositionally biased toward low complexity. 2 stretches are compositionally biased toward acidic residues: residues Gly81 to Ala99 and Glu108 to Asp124. The tract at residues Arg291–Ser409 is required for interaction with NOP7. Residues Ser409–Pro445 are required for interaction with YTM1. 6 WD repeats span residues Gly461 to Lys500, Asn509 to Glu549, Lys657 to Lys695, Pro698 to Lys737, Tyr741 to Lys780, and Val796 to Thr827.

This sequence belongs to the WD repeat BOP1/ERB1 family. As to quaternary structure, component of the NOP7 complex, composed of ERB1, NOP7 and YTM1. The complex is held together by ERB1, which interacts with NOP7 via its N-terminal domain and with YTM1 via a high-affinity interaction between the seven-bladed beta-propeller domains of the 2 proteins. The NOP7 complex associates with the 66S pre-ribosome.

It localises to the nucleus. The protein localises to the nucleolus. Its subcellular location is the nucleoplasm. Functionally, component of the NOP7 complex, which is required for maturation of the 25S and 5.8S ribosomal RNAs and formation of the 60S ribosome. This is Ribosome biogenesis protein ERB1 from Eremothecium gossypii (strain ATCC 10895 / CBS 109.51 / FGSC 9923 / NRRL Y-1056) (Yeast).